The chain runs to 118 residues: MAPLVALVLLGLLSLSGLDAVARPPKVQVYSRHPAENGKPNYLNCYVSGFHPPQIEIDLLKNGEKMNAEQSDLSFSKDWSFYLLVHTEFTPNAVDQYSCRVKHVTLDKPKIVKWDRDH.

An N-terminal signal peptide occupies residues 1-20 (MAPLVALVLLGLLSLSGLDA). In terms of domain architecture, Ig-like C1-type spans 25-112 (PKVQVYSRHP…HVTLDKPKIV (88 aa)). Cysteine 45 and cysteine 99 are joined by a disulfide.

This sequence belongs to the beta-2-microglobulin family. As to quaternary structure, heterodimer of an alpha chain and a beta chain. Beta-2-microglobulin is the beta-chain of major histocompatibility complex class I molecules.

It is found in the secreted. Its function is as follows. Component of the class I major histocompatibility complex (MHC). Involved in the presentation of peptide antigens to the immune system. This Sus scrofa (Pig) protein is Beta-2-microglobulin (B2M).